Here is a 459-residue protein sequence, read N- to C-terminus: Exodeoxyribonuclease 7 large subunit (459 aa).

Belongs to the XseA family. In terms of assembly, heterooligomer composed of large and small subunits.

Its subcellular location is the cytoplasm. The catalysed reaction is Exonucleolytic cleavage in either 5'- to 3'- or 3'- to 5'-direction to yield nucleoside 5'-phosphates.. Its function is as follows. Bidirectionally degrades single-stranded DNA into large acid-insoluble oligonucleotides, which are then degraded further into small acid-soluble oligonucleotides. The sequence is that of Exodeoxyribonuclease 7 large subunit from Pseudomonas aeruginosa (strain LESB58).